Reading from the N-terminus, the 542-residue chain is Cytochrome P450 79B1 (542 aa).

The helical transmembrane segment at 21–41 threads the bilayer; the sequence is FSNMYLLTTLQAFVAITLVML. C478 contributes to the heme binding site.

It belongs to the cytochrome P450 family. The cofactor is heme.

Its subcellular location is the membrane. Functionally, converts tyrosine to para-hydrophenylacetaldoxime in para-hydroxybenzylglucosinolate biosynthesis. The polypeptide is Cytochrome P450 79B1 (CYP79B1) (Sinapis alba (White mustard)).